A 332-amino-acid chain; its full sequence is UPF0194 membrane protein YbhG (332 aa).

Positions 1 to 16 (MMKKPVVIGLAVVVLA) are cleaved as a signal peptide. The stretch at 108-209 (EEIAQAAAAV…LNLQDSTLIA (102 aa)) forms a coiled coil.

It belongs to the UPF0194 family.

Its subcellular location is the periplasm. The sequence is that of UPF0194 membrane protein YbhG from Shigella boydii serotype 4 (strain Sb227).